The primary structure comprises 210 residues: MRCLTTPVLLRALAQAARAGPPGGRSLHSSAVAATYKYVNMQDPEMDMKSVTDRAARTLLWTELFRGLGMTLSYLFREPATINYPFEKGPLSPRFRGEHALRRYPSGEERCIACKLCEAICPAQAITIEAEPRADGSRRTTRYDIDMTKCIYCGFCQEACPVDAIVEGPNFEFSTETHEELLYNKEKLLNNGDKWEAEITANIQADYLYR.

A mitochondrion-targeting transit peptide spans 1–34 (MRCLTTPVLLRALAQAARAGPPGGRSLHSSAVAA). 2 4Fe-4S ferredoxin-type domains span residues 102 to 131 (RRYP…IEAE) and 141 to 170 (TRYD…EGPN). Positions 111, 114, 117, 121, 150, 153, 156, and 160 each coordinate [4Fe-4S] cluster.

It belongs to the complex I 23 kDa subunit family. In terms of assembly, core subunit of respiratory chain NADH dehydrogenase (Complex I) which is composed of 45 different subunits. This is a component of the iron-sulfur (IP) fragment of the enzyme. Interacts with RAB5IF. It depends on [4Fe-4S] cluster as a cofactor.

The protein localises to the mitochondrion inner membrane. The catalysed reaction is a ubiquinone + NADH + 5 H(+)(in) = a ubiquinol + NAD(+) + 4 H(+)(out). Core subunit of the mitochondrial membrane respiratory chain NADH dehydrogenase (Complex I) which catalyzes electron transfer from NADH through the respiratory chain, using ubiquinone as an electron acceptor. Essential for the catalytic activity and assembly of complex I. The chain is NADH dehydrogenase [ubiquinone] iron-sulfur protein 8, mitochondrial (NDUFS8) from Gorilla gorilla gorilla (Western lowland gorilla).